The primary structure comprises 122 residues: Small ribosomal subunit protein uS13 (122 aa).

A disordered region spans residues 94 to 122 (KQLPVRGQRTHTNARTRKGKAKPIAGKKK).

It belongs to the universal ribosomal protein uS13 family. In terms of assembly, part of the 30S ribosomal subunit. Forms a loose heterodimer with protein S19. Forms two bridges to the 50S subunit in the 70S ribosome.

Functionally, located at the top of the head of the 30S subunit, it contacts several helices of the 16S rRNA. In the 70S ribosome it contacts the 23S rRNA (bridge B1a) and protein L5 of the 50S subunit (bridge B1b), connecting the 2 subunits; these bridges are implicated in subunit movement. Contacts the tRNAs in the A and P-sites. The chain is Small ribosomal subunit protein uS13 from Methylorubrum extorquens (strain PA1) (Methylobacterium extorquens).